The following is an 849-amino-acid chain: Glycogen phosphorylase (849 aa).

An N6-(pyridoxal phosphate)lysine modification is found at lysine 679.

It belongs to the glycogen phosphorylase family. Pyridoxal 5'-phosphate serves as cofactor.

It catalyses the reaction [(1-&gt;4)-alpha-D-glucosyl](n) + phosphate = [(1-&gt;4)-alpha-D-glucosyl](n-1) + alpha-D-glucose 1-phosphate. In terms of biological role, phosphorylase is an important allosteric enzyme in carbohydrate metabolism. Enzymes from different sources differ in their regulatory mechanisms and in their natural substrates. However, all known phosphorylases share catalytic and structural properties. This Synechocystis sp. (strain ATCC 27184 / PCC 6803 / Kazusa) protein is Glycogen phosphorylase (glgP).